We begin with the raw amino-acid sequence, 1023 residues long: Hemolysin, chromosomal (1023 aa).

Helical transmembrane passes span 237 to 259 (IGAG…ILSN), 267 to 326 (KAAA…LSIA), and 364 to 410 (DASL…GILE). N6-myristoyl lysine attachment occurs at residues K563 and K689. Hemolysin-type calcium-binding repeat units follow at residues 731-748 (FGSK…DDHI), 749-766 (EGND…NDTL), 767-784 (SGGN…NDKL), 785-802 (IGGA…DDEL), 815-832 (SGGK…ADLL), and 833-850 (DGGE…NDIY). Residues 747–763 (HIEGNDGNDRLYGDKGN) show a composition bias toward basic and acidic residues. A disordered region spans residues 747 to 780 (HIEGNDGNDRLYGDKGNDTLSGGNGDDQLYGGDG).

Belongs to the RTX prokaryotic toxin (TC 1.C.11) family. Post-translationally, myristoylated by HlyC; the toxin only becomes active when modified. Mainly myristoylated, while a minor fraction is acylated with pentadecanoyl (C15:0; 26%) and heptadecanoyl (C17:0; 6%) fatty acyl groups. Fatty acylation is involved in binding to host membranes and promotes the irreversible insertion of Hemolysin into the host cell membrane. Can be activated by both myristoylation and palmitoylation, but HlyC catalyzes lysine myristoylation.

The protein resides in the secreted. It localises to the host cell membrane. Its function is as follows. Bacterial hemolysins are exotoxins that attack blood cell membranes and cause cell rupture by forming a pore. The chain is Hemolysin, chromosomal from Escherichia coli.